A 92-amino-acid polypeptide reads, in one-letter code: C-C motif chemokine 4 (92 aa).

A signal peptide spans 1–23; the sequence is MKLCVSAFSLLLLVAAFCDSVLS. 2 disulfide bridges follow: cysteine 34-cysteine 58 and cysteine 35-cysteine 74.

The protein belongs to the intercrine beta (chemokine CC) family. Homodimer.

It localises to the secreted. Its function is as follows. Monokine with inflammatory and chemokinetic properties. This chain is C-C motif chemokine 4 (Ccl4), found in Rattus norvegicus (Rat).